Reading from the N-terminus, the 415-residue chain is Putative FNIP repeat-containing protein L415 (415 aa).

An FNIP repeat occupies 148 to 185; sequence FIKKGAIPDSVTHLYFGSDYLSKDIIPKNVVYLRFGDF.

This is Putative FNIP repeat-containing protein L415 from Acanthamoeba polyphaga mimivirus (APMV).